The sequence spans 402 residues: Cysteine desulfurase NifS (402 aa).

Pyridoxal 5'-phosphate-binding positions include 72-73 (GT), asparagine 151, glutamine 179, and 199-201 (CGH). At lysine 202 the chain carries N6-(pyridoxal phosphate)lysine. Pyridoxal 5'-phosphate is bound at residue threonine 237. Cysteine 325 acts as the Cysteine persulfide intermediate in catalysis. Cysteine 325 serves as a coordination point for [2Fe-2S] cluster.

The protein belongs to the class-V pyridoxal-phosphate-dependent aminotransferase family. NifS/IscS subfamily. In terms of assembly, homodimer. It depends on pyridoxal 5'-phosphate as a cofactor.

It catalyses the reaction (sulfur carrier)-H + L-cysteine = (sulfur carrier)-SH + L-alanine. Its activity is regulated as follows. Inhibited by equimolar concentrations of p-chloromercuribenzoic acid, iodoacetamide or N-ethylmaleimide. Its function is as follows. Catalyzes the removal of elemental sulfur atoms from cysteine to produce alanine. Seems to participate in the biosynthesis of the nitrogenase metalloclusters by providing the inorganic sulfur required for the Fe-S core formation. In Azotobacter vinelandii, this protein is Cysteine desulfurase NifS.